A 244-amino-acid polypeptide reads, in one-letter code: Cell division protein ZipA (244 aa).

Residues 1–4 are Periplasmic-facing; sequence MSDM. Residues 5 to 25 traverse the membrane as a helical segment; sequence AMIRIGILIAGLLLVAAIFLF. Residues 26–244 are Cytoplasmic-facing; that stretch reads GRPKKSPQGR…APPLTKSPRW (219 aa). The tract at residues 30–91 is disordered; that stretch reads KSPQGRRVDK…GAGGNDVGKR (62 aa). Residues 35 to 50 are compositionally biased toward basic and acidic residues; that stretch reads RRVDKDDTQPRERREP.

It belongs to the ZipA family. Interacts with FtsZ via their C-terminal domains.

The protein resides in the cell inner membrane. Functionally, essential cell division protein that stabilizes the FtsZ protofilaments by cross-linking them and that serves as a cytoplasmic membrane anchor for the Z ring. Also required for the recruitment to the septal ring of downstream cell division proteins. The protein is Cell division protein ZipA of Xanthomonas campestris pv. campestris (strain ATCC 33913 / DSM 3586 / NCPPB 528 / LMG 568 / P 25).